The chain runs to 479 residues: Sulfate adenylyltransferase subunit 1 (479 aa).

The region spanning 25–239 (KSLLRFLTCG…EVLETVDIQR (215 aa)) is the tr-type G domain. The segment at 34-41 (GSVDDGKS) is G1. 34 to 41 (GSVDDGKS) serves as a coordination point for GTP. The G2 stretch occupies residues 92–96 (GITID). A G3 region spans residues 113–116 (DTPG). GTP contacts are provided by residues 113–117 (DTPGH) and 168–171 (NKMD). The segment at 168 to 171 (NKMD) is G4. A G5 region spans residues 206-208 (SAL).

Belongs to the TRAFAC class translation factor GTPase superfamily. Classic translation factor GTPase family. CysN/NodQ subfamily. Heterodimer composed of CysD, the smaller subunit, and CysN.

The enzyme catalyses sulfate + ATP + H(+) = adenosine 5'-phosphosulfate + diphosphate. Its pathway is sulfur metabolism; hydrogen sulfide biosynthesis; sulfite from sulfate: step 1/3. Its function is as follows. With CysD forms the ATP sulfurylase (ATPS) that catalyzes the adenylation of sulfate producing adenosine 5'-phosphosulfate (APS) and diphosphate, the first enzymatic step in sulfur assimilation pathway. APS synthesis involves the formation of a high-energy phosphoric-sulfuric acid anhydride bond driven by GTP hydrolysis by CysN coupled to ATP hydrolysis by CysD. The protein is Sulfate adenylyltransferase subunit 1 of Salmonella dublin (strain CT_02021853).